The chain runs to 695 residues: Centrosomal protein kizuna (695 aa).

The span at Met1–Leu12 shows a compositional bias: gly residues. Residues Met1–Ser24 form a disordered region. Residues Ala15 to Ser24 are compositionally biased toward low complexity. Coiled coils occupy residues Glu29–Lys57 and Val102–Asp132. Disordered regions lie at residues Glu261–Glu313, His351–Thr391, Gln444–Pro465, and Ser633–Thr695. Composition is skewed to polar residues over residues Gly263 to Ser274 and Leu282 to Thr297. Composition is skewed to basic and acidic residues over residues Leu299 to Glu313 and Asp360 to Glu377. Residues Gly382–Thr391 show a composition bias toward low complexity. Thr391 carries the post-translational modification Phosphothreonine; by PLK1. Residues Asp448–Pro465 show a composition bias toward basic and acidic residues. Over residues Ser633–Leu645 the composition is skewed to low complexity. Phosphoserine is present on residues Ser667, Ser670, and Ser672. The segment covering Ala676 to Pro686 has biased composition (basic and acidic residues).

This sequence belongs to the kizuna family. Interacts with AKAP9, CEP72, ODF2, PCNT and TUBGCP2. Post-translationally, phosphorylation at Thr-391 by PLK1 is not needed for centrosomal localization or pericentriolar material expansion but is indispensable for spindle-pole stabilization.

Its subcellular location is the cytoplasm. It is found in the cytoskeleton. The protein resides in the microtubule organizing center. The protein localises to the centrosome. It localises to the cilium basal body. Functionally, centrosomal protein required for establishing a robust mitotic centrosome architecture that can endure the forces that converge on the centrosomes during spindle formation. Required for stabilizing the expanded pericentriolar material around the centriole. This chain is Centrosomal protein kizuna (Kiz), found in Mus musculus (Mouse).